We begin with the raw amino-acid sequence, 162 residues long: NADH-ubiquinone oxidoreductase subunit 8 (162 aa).

4Fe-4S ferredoxin-type domains are found at residues 54-83 (RRYQ…IESE) and 93-122 (TRYD…EGPN). Residues Cys-63, Cys-66, Cys-69, Cys-73, Cys-102, Cys-105, Cys-108, and Cys-112 each coordinate [4Fe-4S] cluster.

The protein belongs to the complex I 23 kDa subunit family. The cofactor is [4Fe-4S] cluster.

The protein resides in the mitochondrion. It catalyses the reaction a ubiquinone + NADH + 5 H(+)(in) = a ubiquinol + NAD(+) + 4 H(+)(out). Functionally, core subunit of the mitochondrial membrane respiratory chain NADH dehydrogenase (Complex I) that is believed to belong to the minimal assembly required for catalysis. Complex I functions in the transfer of electrons from NADH to the respiratory chain. The immediate electron acceptor for the enzyme is believed to be ubiquinone. May donate electrons to ubiquinone. The polypeptide is NADH-ubiquinone oxidoreductase subunit 8 (NAD8) (Reclinomonas americana).